The chain runs to 110 residues: Large ribosomal subunit protein uL22 (110 aa).

This sequence belongs to the universal ribosomal protein uL22 family. As to quaternary structure, part of the 50S ribosomal subunit.

In terms of biological role, this protein binds specifically to 23S rRNA; its binding is stimulated by other ribosomal proteins, e.g. L4, L17, and L20. It is important during the early stages of 50S assembly. It makes multiple contacts with different domains of the 23S rRNA in the assembled 50S subunit and ribosome. Functionally, the globular domain of the protein is located near the polypeptide exit tunnel on the outside of the subunit, while an extended beta-hairpin is found that lines the wall of the exit tunnel in the center of the 70S ribosome. The sequence is that of Large ribosomal subunit protein uL22 from Pseudomonas savastanoi pv. phaseolicola (strain 1448A / Race 6) (Pseudomonas syringae pv. phaseolicola (strain 1448A / Race 6)).